The following is a 286-amino-acid chain: 4-hydroxy-3-methylbut-2-enyl diphosphate reductase (286 aa).

A [4Fe-4S] cluster-binding site is contributed by Cys12. (2E)-4-hydroxy-3-methylbut-2-enyl diphosphate is bound by residues His46 and His79. His46 and His79 together coordinate dimethylallyl diphosphate. Isopentenyl diphosphate contacts are provided by His46 and His79. Cys101 lines the [4Fe-4S] cluster pocket. His129 provides a ligand contact to (2E)-4-hydroxy-3-methylbut-2-enyl diphosphate. His129 provides a ligand contact to dimethylallyl diphosphate. Residue His129 participates in isopentenyl diphosphate binding. Catalysis depends on Glu131, which acts as the Proton donor. Thr169 contributes to the (2E)-4-hydroxy-3-methylbut-2-enyl diphosphate binding site. Cys198 serves as a coordination point for [4Fe-4S] cluster. The (2E)-4-hydroxy-3-methylbut-2-enyl diphosphate site is built by Ser226, Asn228, and Ser270. Ser226, Asn228, and Ser270 together coordinate dimethylallyl diphosphate. Ser226, Asn228, and Ser270 together coordinate isopentenyl diphosphate.

The protein belongs to the IspH family. The cofactor is [4Fe-4S] cluster.

It catalyses the reaction isopentenyl diphosphate + 2 oxidized [2Fe-2S]-[ferredoxin] + H2O = (2E)-4-hydroxy-3-methylbut-2-enyl diphosphate + 2 reduced [2Fe-2S]-[ferredoxin] + 2 H(+). The enzyme catalyses dimethylallyl diphosphate + 2 oxidized [2Fe-2S]-[ferredoxin] + H2O = (2E)-4-hydroxy-3-methylbut-2-enyl diphosphate + 2 reduced [2Fe-2S]-[ferredoxin] + 2 H(+). It functions in the pathway isoprenoid biosynthesis; dimethylallyl diphosphate biosynthesis; dimethylallyl diphosphate from (2E)-4-hydroxy-3-methylbutenyl diphosphate: step 1/1. It participates in isoprenoid biosynthesis; isopentenyl diphosphate biosynthesis via DXP pathway; isopentenyl diphosphate from 1-deoxy-D-xylulose 5-phosphate: step 6/6. Its function is as follows. Catalyzes the conversion of 1-hydroxy-2-methyl-2-(E)-butenyl 4-diphosphate (HMBPP) into a mixture of isopentenyl diphosphate (IPP) and dimethylallyl diphosphate (DMAPP). Acts in the terminal step of the DOXP/MEP pathway for isoprenoid precursor biosynthesis. The sequence is that of 4-hydroxy-3-methylbut-2-enyl diphosphate reductase from Solidesulfovibrio magneticus (strain ATCC 700980 / DSM 13731 / RS-1) (Desulfovibrio magneticus).